The chain runs to 255 residues: tRNA (guanine-N(7)-)-methyltransferase (255 aa).

A disordered region spans residues 1-29; the sequence is MMHDDPNEAGLPPDDAALPDEAADGADEV. The segment covering 17–27 has biased composition (acidic residues); that stretch reads ALPDEAADGAD. Glu86, Glu111, Asp138, and Asp161 together coordinate S-adenosyl-L-methionine. Asp161 is a catalytic residue. Substrate contacts are provided by residues Lys165, Asp197, and 232–235; that span reads TKFE.

Belongs to the class I-like SAM-binding methyltransferase superfamily. TrmB family.

It carries out the reaction guanosine(46) in tRNA + S-adenosyl-L-methionine = N(7)-methylguanosine(46) in tRNA + S-adenosyl-L-homocysteine. Its pathway is tRNA modification; N(7)-methylguanine-tRNA biosynthesis. In terms of biological role, catalyzes the formation of N(7)-methylguanine at position 46 (m7G46) in tRNA. This chain is tRNA (guanine-N(7)-)-methyltransferase, found in Burkholderia ambifaria (strain ATCC BAA-244 / DSM 16087 / CCUG 44356 / LMG 19182 / AMMD) (Burkholderia cepacia (strain AMMD)).